A 100-amino-acid chain; its full sequence is Large ribosomal subunit protein uL23 (100 aa).

The protein belongs to the universal ribosomal protein uL23 family. As to quaternary structure, part of the 50S ribosomal subunit. Contacts protein L29, and trigger factor when it is bound to the ribosome.

In terms of biological role, one of the early assembly proteins it binds 23S rRNA. One of the proteins that surrounds the polypeptide exit tunnel on the outside of the ribosome. Forms the main docking site for trigger factor binding to the ribosome. This is Large ribosomal subunit protein uL23 from Mycobacterium tuberculosis (strain ATCC 25177 / H37Ra).